The chain runs to 477 residues: MATYTCITCRVAFRDADMQRAHYKTDWHRYNLRRKVASMAPVTAEGFQERVRAQRAVAEEESKGSATYCTVCSKKFASFNAYENHLKSRRHVELEKKAVQAVNRKVEMMNEKNLEKGLGVDSVDKDAMNAAIQQAIKAQPSMSPKKAPPAPAKEARNVVAVGTGGRGTHDRDPSEKPPRLQWFEQQAKKLAKQQEEDSEEEEEDLDGDDWEDIDSDEELECEDTEAMDDVVEQDAEEEEAEEGPPLGAIPITDCLFCSHHSSSLMKNVAHMTKDHSFFIPDIEYLSDIKGLIKYLGEKVGVGKICLWCNEKGKSFYSTEAVQAHMNDKSHCKLFTDGDAALEFADFYDFRSSYPDHKEGEDPNKAEELPSEKNLEYDDETMELILPSGARVGHRSLMRYYKQRFGLSRAVAVAKNRKAVGRVLQQYRALGWTGSTGAALMRERDMQYVQRMKSKWMLKTGMKNNATKQMHFRVQVRF.

Ala2 is subject to N-acetylalanine. U1-type zinc fingers lie at residues 4–28 (YTCITCRVAFRDADMQRAHYKTDWH) and 67–91 (TYCTVCSKKFASFNAYENHLKSRRH). Residues 135–212 (AIKAQPSMSP…EDLDGDDWED (78 aa)) form a disordered region. Residues 167–178 (GTHDRDPSEKPP) are compositionally biased toward basic and acidic residues. Residues 196 to 212 (EDSEEEEEDLDGDDWED) show a composition bias toward acidic residues. The residue at position 276 (Ser276) is a Phosphoserine.

This sequence belongs to the REI1 family. In terms of assembly, homo- and heterodimer. Associates with pre-60S ribosomal particles. Interacts with MELK and MYBL2. Interacts with DNAJC21. Post-translationally, phosphorylated by MELK. The phosphorylation may redirect the protein to the nucleus. Ubiquitinated by HECTD1, leading to its degradation. Expressed in lung, kidney, spleen, liver and brain with lowest expression in kidney.

It localises to the cytoplasm. The protein resides in the nucleus. Functionally, pre-60S-associated cytoplasmic factor involved in the cytoplasmic maturation of the 60S subunit. This Homo sapiens (Human) protein is Cytoplasmic 60S subunit biogenesis factor ZNF622.